Here is a 670-residue protein sequence, read N- to C-terminus: Transcriptional regulatory protein DOT6 (670 aa).

Positions 1–44 (MSISTSLNSASIHLSSMDTHPQLHSLTRQPHSSSTAMSKNEAQE) are enriched in polar residues. A disordered region spans residues 1 to 78 (MSISTSLNSA…SKNPSSWDPQ (78 aa)). Over residues 45 to 74 (SSPSLPASSSSSTSASASASSKNSSKNPSS) the composition is skewed to low complexity. The HTH myb-type domain occupies 67-121 (NSSKNPSSWDPQDDLLLRHLKEVKKMGWKDISQYFPNRTPNACQFRWRRLKSGNL). Positions 94-117 (WKDISQYFPNRTPNACQFRWRRLK) form a DNA-binding region, H-T-H motif. Residues 226-242 (HHPHQHLHHHPHHKTLK) are compositionally biased toward basic residues. Disordered regions lie at residues 226 to 250 (HHPH…SHSF), 293 to 332 (TTPS…NTSR), 406 to 436 (HSSS…CNPT), and 483 to 659 (ADML…NSPL). A phosphoserine mark is found at Ser-245 and Ser-247. Low complexity-rich tracts occupy residues 295-307 (PSSP…LLSS) and 316-332 (NWSR…NTSR). The segment covering 425–436 (SGHSMKSSCNPT) has biased composition (polar residues). A Phosphoserine modification is found at Ser-487. A Phosphothreonine modification is found at Thr-489. At Ser-491 the chain carries Phosphoserine. The span at 512–522 (DDDKGSDKEDV) shows a compositional bias: basic and acidic residues. Low complexity-rich tracts occupy residues 544-561 (SSNK…SSKD) and 587-598 (TITSDTSSSAAT). The span at 599–608 (MNRTPNSKNP) shows a compositional bias: polar residues. Low complexity predominate over residues 622-659 (ITPRPKPSSTTTSITTETTNNMINHSSSTTTTTNNSPL).

It belongs to the DOT6 family. As to quaternary structure, component of the RPD3C(L) complex composed of at least ASH1, CTI6, DEP1, DOT6, PHO23, RPD3, RXT2, RXT3, SAP30, SDS3, SIN3, TOD6; UME1 and UME6.

Its subcellular location is the nucleus. Functionally, component of the RPD3 histone deacetylase complex RPD3C(L) responsible for the deacetylation of lysine residues on the N-terminal part of the core histones (H2A, H2B, H3 and H4). Histone deacetylation gives a tag for epigenetic repression and plays an important role in transcriptional regulation, cell cycle progression and developmental events. DOT6 binds to sequences containing the core CGATG, which resembles the PAC (Polymerase A and C) motif. This Saccharomyces cerevisiae (strain ATCC 204508 / S288c) (Baker's yeast) protein is Transcriptional regulatory protein DOT6 (DOT6).